A 48-amino-acid chain; its full sequence is Large ribosomal subunit protein bL36c (48 aa).

This sequence belongs to the bacterial ribosomal protein bL36 family.

The protein localises to the plastid. Its subcellular location is the chloroplast. In Guillardia theta (Cryptophyte), this protein is Large ribosomal subunit protein bL36c (rpl36).